Consider the following 256-residue polypeptide: 5-keto-4-deoxy-D-glucarate aldolase (256 aa).

His-50 serves as the catalytic Proton acceptor. Gln-151 contacts substrate. Glu-153 is a binding site for Mg(2+). Residues Ser-178 and Asp-179 each coordinate substrate. Asp-179 contacts Mg(2+).

It belongs to the HpcH/HpaI aldolase family. KDGluc aldolase subfamily. As to quaternary structure, homohexamer; trimer of dimers. Mg(2+) serves as cofactor.

It catalyses the reaction 5-dehydro-4-deoxy-D-glucarate = 2-hydroxy-3-oxopropanoate + pyruvate. It carries out the reaction 2-dehydro-3-deoxy-D-glucarate = 2-hydroxy-3-oxopropanoate + pyruvate. It functions in the pathway carbohydrate acid metabolism; galactarate degradation; D-glycerate from galactarate: step 2/3. Its function is as follows. Catalyzes the reversible retro-aldol cleavage of both 5-keto-4-deoxy-D-glucarate and 2-keto-3-deoxy-D-glucarate to pyruvate and tartronic semialdehyde. The chain is 5-keto-4-deoxy-D-glucarate aldolase from Escherichia coli O6:H1 (strain CFT073 / ATCC 700928 / UPEC).